Consider the following 2126-residue polypeptide: Phthioceranic/hydroxyphthioceranic acid synthase (2126 aa).

Positions 24–447 (VTPVAVIGMA…GTNVHAVVEQ (424 aa)) constitute a Ketosynthase family 3 (KS3) domain. C196 functions as the Acyl-thioester intermediate; for beta-ketoacyl synthase activity in the catalytic mechanism. Residues H331 and H367 each act as for beta-ketoacyl synthase activity in the active site. A linker domain (LD) region spans residues 449–549 (PQTEAQPHAA…VYQPAVGQDD (101 aa)). The acyltransferase (AT) stretch occupies residues 550–849 (RGPVWLFSGQ…VAALAGMRRE (300 aa)). S641 acts as the Acyl-ester intermediate; for acyltransferase activity in catalysis. The dehydratase (DH) stretch occupies residues 909 to 1191 (STVAVHPLLG…LAVCGLRIGT (283 aa)). The N-terminal hotdog fold stretch occupies residues 914–1032 (HPLLGAHVRL…RRASAVLQQV (119 aa)). The PKS/mFAS DH domain occupies 914–1198 (HPLLGAHVRL…IGTGVSERDK (285 aa)). H947 acts as the Proton acceptor; for dehydratase activity in catalysis. Residues 1051-1198 (PCRVDGEDLR…IGTGVSERDK (148 aa)) are C-terminal hotdog fold. D1115 functions as the Proton donor; for dehydratase activity in the catalytic mechanism. The pseudo beta-ketoacyl reductase (PsiKR) stretch occupies residues 1227–1398 (KWLLISDCAA…SEEDETAWRD (172 aa)). The enoylreductase (ER) stretch occupies residues 1426–1750 (SGMRLQIRTP…EHTGKLVLHI (325 aa)). Positions 1772-2019 (GSYIITGGLG…AERSRFFEVF (248 aa)) are beta-ketoacyl reductase (KR). NADP(+) is bound by residues 1780–1783 (LGGL), 1803–1806 (SRTQ), 1831–1832 (DI), and 1904–1905 (FS). The Carrier domain maps to 2040-2126 (DEWPARLRQL…DAPAAALSSQ (87 aa)). At S2075 the chain carries O-(pantetheine 4'-phosphoryl)serine.

It depends on pantetheine 4'-phosphate as a cofactor.

It carries out the reaction hexadecanoyl-[(hydroxy)phthioceranic acid synthase] + 7 (S)-methylmalonyl-CoA + 14 NADPH + 21 H(+) = C37-phthioceranyl-[(hydroxy)phthioceranic acid synthase] + 7 CO2 + 14 NADP(+) + 7 CoA + 7 H2O. The catalysed reaction is hexadecanoyl-[(hydroxy)phthioceranic acid synthase] + 8 (S)-methylmalonyl-CoA + 16 NADPH + 24 H(+) = C40-phthioceranyl-[(hydroxy)phthioceranic acid synthase] + 8 CO2 + 16 NADP(+) + 8 CoA + 8 H2O. It functions in the pathway lipid metabolism; fatty acid biosynthesis. The protein operates within glycolipid metabolism; sulfolipid-1 biosynthesis. Functionally, involved in sulfolipid-1 biosynthesis. Catalyzes the synthesis of the hepta- and octamethyl phthioceranic and hydroxyphthioceranic acids, the methyl-branched acyl constituents of sulfolipids. This chain is Phthioceranic/hydroxyphthioceranic acid synthase (pks2), found in Mycobacterium bovis (strain ATCC BAA-935 / AF2122/97).